Here is a 1373-residue protein sequence, read N- to C-terminus: DNA-directed RNA polymerase subunit beta'' (1373 aa).

Residues cysteine 220, cysteine 293, cysteine 300, and cysteine 303 each coordinate Zn(2+).

The protein belongs to the RNA polymerase beta' chain family. RpoC2 subfamily. In terms of assembly, in plastids the minimal PEP RNA polymerase catalytic core is composed of four subunits: alpha, beta, beta', and beta''. When a (nuclear-encoded) sigma factor is associated with the core the holoenzyme is formed, which can initiate transcription. The cofactor is Zn(2+).

It is found in the plastid. It localises to the chloroplast. The enzyme catalyses RNA(n) + a ribonucleoside 5'-triphosphate = RNA(n+1) + diphosphate. DNA-dependent RNA polymerase catalyzes the transcription of DNA into RNA using the four ribonucleoside triphosphates as substrates. This is DNA-directed RNA polymerase subunit beta'' from Lepidium virginicum (Virginia pepperweed).